The sequence spans 301 residues: Acetaldehyde dehydrogenase (301 aa).

The Acyl-thioester intermediate role is filled by cysteine 130. Residues 161–169 and asparagine 272 contribute to the NAD(+) site; that span reads SVGPGTRRN.

It belongs to the acetaldehyde dehydrogenase family.

The catalysed reaction is acetaldehyde + NAD(+) + CoA = acetyl-CoA + NADH + H(+). The polypeptide is Acetaldehyde dehydrogenase (mhpF) (Cupriavidus taiwanensis (strain DSM 17343 / BCRC 17206 / CCUG 44338 / CIP 107171 / LMG 19424 / R1) (Ralstonia taiwanensis (strain LMG 19424))).